A 443-amino-acid polypeptide reads, in one-letter code: 3-phosphoshikimate 1-carboxyvinyltransferase (443 aa).

A disordered region spans residues 1–25; it reads MSHSAEPLPMTARRSGPLTGEAQVP. Residues Lys28, Ser29, and Arg33 each coordinate 3-phosphoshikimate. Residue Lys28 coordinates phosphoenolpyruvate. Residues Gly101 and Arg129 each contribute to the phosphoenolpyruvate site. Residues Ser174, Gln176, Asp326, and Lys353 each coordinate 3-phosphoshikimate. Gln176 contacts phosphoenolpyruvate. Asp326 acts as the Proton acceptor in catalysis. Phosphoenolpyruvate-binding residues include Arg357 and Arg400.

The protein belongs to the EPSP synthase family. Monomer.

It localises to the cytoplasm. It carries out the reaction 3-phosphoshikimate + phosphoenolpyruvate = 5-O-(1-carboxyvinyl)-3-phosphoshikimate + phosphate. It functions in the pathway metabolic intermediate biosynthesis; chorismate biosynthesis; chorismate from D-erythrose 4-phosphate and phosphoenolpyruvate: step 6/7. Functionally, catalyzes the transfer of the enolpyruvyl moiety of phosphoenolpyruvate (PEP) to the 5-hydroxyl of shikimate-3-phosphate (S3P) to produce enolpyruvyl shikimate-3-phosphate and inorganic phosphate. This is 3-phosphoshikimate 1-carboxyvinyltransferase from Paracoccus denitrificans (strain Pd 1222).